We begin with the raw amino-acid sequence, 336 residues long: Ribosomal RNA large subunit methyltransferase F (336 aa).

It belongs to the methyltransferase superfamily. METTL16/RlmF family.

The protein localises to the cytoplasm. It catalyses the reaction adenosine(1618) in 23S rRNA + S-adenosyl-L-methionine = N(6)-methyladenosine(1618) in 23S rRNA + S-adenosyl-L-homocysteine + H(+). In terms of biological role, specifically methylates the adenine in position 1618 of 23S rRNA. This Yersinia pestis (strain Pestoides F) protein is Ribosomal RNA large subunit methyltransferase F.